Here is a 166-residue protein sequence, read N- to C-terminus: 6,7-dimethyl-8-ribityllumazine synthase (166 aa).

Residues Phe-24, 58-60 (ALE), and 82-84 (AVI) contribute to the 5-amino-6-(D-ribitylamino)uracil site. Residue 87–88 (ET) participates in (2S)-2-hydroxy-3-oxobutyl phosphate binding. His-90 acts as the Proton donor in catalysis. 5-amino-6-(D-ribitylamino)uracil is bound at residue Asn-115. Arg-129 is a (2S)-2-hydroxy-3-oxobutyl phosphate binding site.

This sequence belongs to the DMRL synthase family.

It catalyses the reaction (2S)-2-hydroxy-3-oxobutyl phosphate + 5-amino-6-(D-ribitylamino)uracil = 6,7-dimethyl-8-(1-D-ribityl)lumazine + phosphate + 2 H2O + H(+). It participates in cofactor biosynthesis; riboflavin biosynthesis; riboflavin from 2-hydroxy-3-oxobutyl phosphate and 5-amino-6-(D-ribitylamino)uracil: step 1/2. Its function is as follows. Catalyzes the formation of 6,7-dimethyl-8-ribityllumazine by condensation of 5-amino-6-(D-ribitylamino)uracil with 3,4-dihydroxy-2-butanone 4-phosphate. This is the penultimate step in the biosynthesis of riboflavin. The protein is 6,7-dimethyl-8-ribityllumazine synthase of Ralstonia pickettii (strain 12J).